The primary structure comprises 122 residues: Large ribosomal subunit protein uL18 (122 aa).

The segment covering 1–21 has biased composition (basic residues); sequence MSKLSRKQQTQKRHRRLRRHI. Residues 1-25 are disordered; the sequence is MSKLSRKQQTQKRHRRLRRHITGTS.

The protein belongs to the universal ribosomal protein uL18 family. Part of the 50S ribosomal subunit; part of the 5S rRNA/L5/L18/L25 subcomplex. Contacts the 5S and 23S rRNAs.

Its function is as follows. This is one of the proteins that bind and probably mediate the attachment of the 5S RNA into the large ribosomal subunit, where it forms part of the central protuberance. In Synechococcus sp. (strain CC9902), this protein is Large ribosomal subunit protein uL18.